Consider the following 144-residue polypeptide: HTH-type transcriptional regulator LrpC (144 aa).

The region spanning 3–64 (LDQIDLNIIE…EVDQKKLGLP (62 aa)) is the HTH asnC-type domain. A DNA-binding region (H-T-H motif) is located at residues 22 to 41 (MRELGRKIKLSPPSVTERVR).

Its function is as follows. Transcriptional regulator with a possible role in regulation of amino acid metabolism. Plays a role in the growth phase transition. The protein is HTH-type transcriptional regulator LrpC (lrpC) of Bacillus subtilis (strain 168).